The primary structure comprises 515 residues: Histidine ammonia-lyase (515 aa).

Positions 142-144 form a cross-link, 5-imidazolinone (Ala-Gly); that stretch reads ASG. A 2,3-didehydroalanine (Ser) modification is found at serine 143.

Belongs to the PAL/histidase family. Post-translationally, contains an active site 4-methylidene-imidazol-5-one (MIO), which is formed autocatalytically by cyclization and dehydration of residues Ala-Ser-Gly.

The protein resides in the cytoplasm. The enzyme catalyses L-histidine = trans-urocanate + NH4(+). The protein operates within amino-acid degradation; L-histidine degradation into L-glutamate; N-formimidoyl-L-glutamate from L-histidine: step 1/3. The chain is Histidine ammonia-lyase from Methylobacterium nodulans (strain LMG 21967 / CNCM I-2342 / ORS 2060).